The sequence spans 511 residues: DNA nucleotidylexotransferase (511 aa).

The interval 1-26 (MDPLQTAHAGPRKKRPRQTGASMAST) is disordered. Positions 11–17 (PRKKRPR) match the Nuclear localization signal motif. The 98-residue stretch at 27–124 (PQDVRFQDLV…KPVETTGKHQ (98 aa)) folds into the BRCT domain. At Ser-134 the chain carries Phosphoserine. The tract at residues 151 to 511 (SQYACQRRTT…DYIEPSERNA (361 aa)) is mediates interaction with DNTTIP2. Positions 258-262 (VGLKT) are involved in DNA binding. A 2'-deoxyribonucleoside 5'-triphosphate contacts are provided by residues 333-338 (GFRRGK) and 342-345 (HDVD). Mg(2+)-binding residues include Asp-343, Asp-345, and Asp-435. A 2'-deoxyribonucleoside 5'-triphosphate is bound at residue 450 to 451 (GW).

It belongs to the DNA polymerase type-X family. As to quaternary structure, interacts with PRP19 and DNTTIP1. Forms a ternary complex with DNTTIP2 and core histone. Released from this complex by PCNA. Interacts with TRERF1. It depends on Mg(2+) as a cofactor.

It localises to the nucleus. The enzyme catalyses DNA(n) + a 2'-deoxyribonucleoside 5'-triphosphate = DNA(n+1) + diphosphate. Template-independent DNA polymerase which catalyzes the random addition of deoxynucleoside 5'-triphosphate to the 3'-end of a DNA initiator. One of the in vivo functions of this enzyme is the addition of nucleotides at the junction (N region) of rearranged Ig heavy chain and T-cell receptor gene segments during the maturation of B- and T-cells. This Eulemur macaco (Black lemur) protein is DNA nucleotidylexotransferase (DNTT).